The following is a 126-amino-acid chain: C-X-C motif chemokine 9 (126 aa).

The N-terminal stretch at 1–21 (MKSAVLFLLGIIFLEQCGVRG) is a signal peptide. 2 disulfides stabilise this stretch: cysteine 30/cysteine 57 and cysteine 32/cysteine 73. Residue asparagine 58 is glycosylated (N-linked (GlcNAc...) asparagine). Residues 91–126 (KISQKKKQKRGKKHQKNMKNRKPKTPQSRRRSRKTT) form a disordered region. Positions 93–126 (SQKKKQKRGKKHQKNMKNRKPKTPQSRRRSRKTT) are enriched in basic residues.

It belongs to the intercrine alpha (chemokine CxC) family.

The protein localises to the secreted. Functionally, may be a cytokine that affects the growth, movement, or activation state of cells that participate in immune and inflammatory response. This is C-X-C motif chemokine 9 (Cxcl9) from Mus musculus (Mouse).